Consider the following 343-residue polypeptide: 3-dehydroquinate synthase (343 aa).

NAD(+)-binding positions include 61–66, 95–99, 119–120, Lys132, Lys141, and 159–162; these read SGEKYK, GVISD, TT, and FLKT. Residues Glu174, His231, and His248 each contribute to the Zn(2+) site.

It belongs to the sugar phosphate cyclases superfamily. Dehydroquinate synthase family. Requires Co(2+) as cofactor. Zn(2+) is required as a cofactor. It depends on NAD(+) as a cofactor.

It localises to the cytoplasm. It catalyses the reaction 7-phospho-2-dehydro-3-deoxy-D-arabino-heptonate = 3-dehydroquinate + phosphate. It functions in the pathway metabolic intermediate biosynthesis; chorismate biosynthesis; chorismate from D-erythrose 4-phosphate and phosphoenolpyruvate: step 2/7. Its function is as follows. Catalyzes the conversion of 3-deoxy-D-arabino-heptulosonate 7-phosphate (DAHP) to dehydroquinate (DHQ). The protein is 3-dehydroquinate synthase of Helicobacter pylori (strain HPAG1).